The chain runs to 494 residues: MSKPLFEAYPLTGLDHTIPPCYVRFLLTFPVPDVALAVNQLQKGAENLIEKLPFLAGYLASCETPGVRPGQLEIRPPAGERRPVCLVAHHSNSYLADSSATSTTEQLGTANENYLPVPFFPELDKPVPIFRVKVNAMTDGIILGFAFHHSVIDATGMGTIVRDFARCCRGPDGGPLEISLESQQDSREKLRHSGGPPDPRFDHNGEYPLVASLPADLEAMKQVLIQTARLMSTQYFRIPASLVNTLKESCNRMLRESPALRDEGENPWISSNDLVVSLLWLCLNRVRYPEDNTNVIPPSDSSVCMAVNIRGRLQSPIDPGYVGNAIVLLRESVGMNAFLHKPGDDDPLGAQCYETAKRLGREAWEAALVRIALAIRRKLNTINASYVRSVISYLEDVPDLSTVAFGQTDYHISSWRDIGVYEADFGGHMGHPSEMRVPDGMVDGMFYILPRRQGTHPCWEIHVTIHQDTMKRLIADPVWARYTVRKPSSLCRDE.

Residues 181–203 (ESQQDSREKLRHSGGPPDPRFDH) form a disordered region.

This sequence belongs to the fumigaclavine B O-acetyltransferase family. In terms of assembly, monomer.

The protein operates within secondary metabolite biosynthesis. In terms of biological role, O-acetyltransferase; part of the gene cluster that mediates the biosynthesis of the indole diterpenes penitrems. The geranylgeranyl diphosphate (GGPP) synthase ptmG catalyzes the first step in penitrem biosynthesis via conversion of farnesyl pyrophosphate and isopentyl pyrophosphate into geranylgeranyl pyrophosphate (GGPP). Condensation of indole-3-glycerol phosphate with GGPP by the prenyl transferase ptmC then forms 3-geranylgeranylindole (3-GGI). Epoxidation by the FAD-dependent monooxygenase ptmM leads to a epoxidized-GGI that is substrate of the terpene cyclase ptmB for cyclization to yield paspaline. Paspaline is subsequently converted to 13-desoxypaxilline by the cytochrome P450 monooxygenase ptmP, the latter being then converted to paxilline by the cytochrome P450 monooxygenase ptmQ. Paxilline is converted to beta-paxitriol via C-10 ketoreduction by the short-chain dehydrogenase ptmH which can be monoprenylated at the C-20 by the indole diterpene prenyltransferase ptmD. A two-step elimination (acetylation and elimination) process performed by the O-acetyltransferase ptmV and ptmI leads to the production of the prenylated form of penijanthine. The FAD-linked oxidoreductase ptmO then converts the prenylated form of penijanthine into PC-M5 which is in turn transformed into PC-M4 by the aromatic dimethylallyltransferase ptmE. Five sequential oxidative transformations performed by the cytochrome P450 monooxygenases ptmK, ptmU, ptmL, ptmN and ptmJ yield the various penitrem compounds. PtmK, ptmU and ptmM are involved in the formation of the key bicyclic ring of penitrem C via the formation of the intermediates secopenitrem D and penitrem D. PtmL catalyzes the epoxidation of penitrem D and C to yield penitrem B and F, respectively. PtmJ catalyzes the last benzylic hydroxylation to convert penitrem B to prenitrem E and penitrem F to penitrem A. This Penicillium ochrochloron protein is O-acetyltransferase ptmV.